The primary structure comprises 360 residues: Magnesium transporter NIPA2 (360 aa).

The Extracellular segment spans residues 1 to 9 (MSQGRGKYD). The chain crosses the membrane as a helical span at residues 10–30 (FYIGLGLAMSSSIFIGGSFIL). Topologically, residues 31–56 (KKKGLLRLARKGSMRAGQGGHAYLKE) are cytoplasmic. A helical transmembrane segment spans residues 57–77 (WLWWAGLLSMGAGEVANFAAY). Alanine 78 is a topological domain (extracellular). A helical membrane pass occupies residues 79 to 99 (FAPATLVTPLGALSVLVSAIL). Topologically, residues 100–107 (SSYFLNER) are cytoplasmic. A helical transmembrane segment spans residues 108 to 128 (LNLHGKIGCLLSILGSTVMVI). Residues 129–149 (HAPKEEEIETLNEMSHKLGDP) lie on the Extracellular side of the membrane. The chain crosses the membrane as a helical span at residues 150-170 (GFVVFATLVVIVALILIFVVG). Residues 171 to 175 (PRHGQ) lie on the Cytoplasmic side of the membrane. A helical membrane pass occupies residues 176–196 (TNILVYITICSVIGAFSVSCV). At 197–215 (KGLGIAIKELFAGKPVLRH) the chain is on the extracellular side. Residues 216-236 (PLAWILLLSLIVCVSTQINYL) form a helical membrane-spanning segment. Residues 237–246 (NRALDIFNTS) lie on the Cytoplasmic side of the membrane. Residues 247-267 (IVTPIYYVFFTTSVLTCSAIL) form a helical membrane-spanning segment. Residues 268 to 278 (FKEWQDMPVDD) are Extracellular-facing. Residues 279–299 (VIGTLSGFFTIIVGIFLLHAF) traverse the membrane as a helical segment. At 300 to 360 (KDVSFSLASL…SRRNGNLTAF (61 aa)) the chain is on the cytoplasmic side.

It belongs to the NIPA family. As to expression, widely expressed.

It is found in the cell membrane. Its subcellular location is the early endosome. It catalyses the reaction Mg(2+)(in) = Mg(2+)(out). Its function is as follows. Acts as a selective Mg(2+) transporter. The chain is Magnesium transporter NIPA2 (NIPA2) from Homo sapiens (Human).